The following is a 235-amino-acid chain: Mitochondrial inner membrane protease ATP23 homolog (235 aa).

Position 114 (histidine 114) interacts with a divalent metal cation. Glutamate 115 is a catalytic residue. Histidine 118 contacts a divalent metal cation.

Belongs to the peptidase M76 family.

This Xenopus laevis (African clawed frog) protein is Mitochondrial inner membrane protease ATP23 homolog (atp23).